The chain runs to 391 residues: MAPDNDHFLDSPSPPLLEMRHHQSATENGGGCGEIVEVQGGHIVRSTGRKDRHSKVCTAKGPRDRRVRLSAPTAIQFYDVQDRLGFDRPSKAVDWLITKAKSAIDDLAQLPPWNPADTLRQHAAAAANAKPRKTKTLISPPPPQPEETEHHRIGEEEDNESSFLPASMDSDSIADTIKSFFPVASTQQSYHHQPPSRGNTQNQDLLRLSLQSFQNGPPFPNQTEPALFSGQSNNQLAFDSSTASWEQSHQSPEFGKIQRLVSWNNVGAAESAGSTGGFVFASPSSLHPVYSQSQLLSQRGPLQSINTPMIRAWFDPHHHHHHHQQSMTTDDLHHHHPYHIPPGIHQSAIPGIAFASSGEFSGFRIPARFQGEQEEHGGDNKPSSASSDSRH.

Residues M1–E34 form a disordered region. Residues R49–L107 enclose the TCP domain. Disordered stretches follow at residues H122 to M168, H317 to H345, and F363 to H391. Residues K381–H391 are compositionally biased toward polar residues.

In terms of assembly, interacts with SPL. Interacts with KIN10; KIN11 and FLZ3. Expressed in cotyledons, particularly in the vascular region, in leaves, roots, buds, flowers and immature siliques.

It is found in the nucleus. Functionally, plays a pivotal role in the control of morphogenesis of shoot organs by negatively regulating the expression of boundary-specific genes such as CUC genes, probably through the induction of miRNA (e.g. miR164). Participates in ovule development. The sequence is that of Transcription factor TCP3 (TCP3) from Arabidopsis thaliana (Mouse-ear cress).